Here is a 112-residue protein sequence, read N- to C-terminus: Ribosome-binding factor A (112 aa).

Belongs to the RbfA family. In terms of assembly, monomer. Binds 30S ribosomal subunits, but not 50S ribosomal subunits or 70S ribosomes.

Its subcellular location is the cytoplasm. Its function is as follows. One of several proteins that assist in the late maturation steps of the functional core of the 30S ribosomal subunit. Associates with free 30S ribosomal subunits (but not with 30S subunits that are part of 70S ribosomes or polysomes). Required for efficient processing of 16S rRNA. May interact with the 5'-terminal helix region of 16S rRNA. The protein is Ribosome-binding factor A of Mycoplasmopsis pulmonis (strain UAB CTIP) (Mycoplasma pulmonis).